Here is a 229-residue protein sequence, read N- to C-terminus: UPF0488 protein C8orf33 (229 aa).

A compositionally biased stretch (low complexity) spans 1–16 (MAALGHLAGEAAAAPG). The disordered stretch occupies residues 1-96 (MAALGHLAGE…GEKASEKLAP (96 aa)). N-acetylalanine is present on A2. An Omega-N-methylarginine modification is found at R27. The segment covering 69 to 79 (KKQKNKKKTRN) has biased composition (basic residues). S82 is modified (phosphoserine).

It belongs to the UPF0488 family.

In Homo sapiens (Human), this protein is UPF0488 protein C8orf33 (C8orf33).